The primary structure comprises 69 residues: Large ribosomal subunit protein uL29 (69 aa).

The protein belongs to the universal ribosomal protein uL29 family.

The protein is Large ribosomal subunit protein uL29 of Staphylococcus saprophyticus subsp. saprophyticus (strain ATCC 15305 / DSM 20229 / NCIMB 8711 / NCTC 7292 / S-41).